A 509-amino-acid chain; its full sequence is Pancreatic secretory granule membrane major glycoprotein GP2 (509 aa).

A signal peptide spans 1-21 (MVGSYVLWLALASCILTLASP). The segment at 36-56 (DPCQNYTLLDEPSRSTENTEG) is D10C. Disulfide bonds link C38–C132, C60–C147, C82–C120, C88–C152, C113–C121, C162–C172, C166–C181, C183–C213, C201–C292, and C233–C256. Residues N40, N97, and N109 are each glycosylated (N-linked (GlcNAc...) asparagine). Residues 158 to 202 (ATDKCKNLCRPEEACSFLNGTWDCFCRSDLNSSDVHSLQPRLNCG) form the EGF-like domain. 3 N-linked (GlcNAc...) asparagine glycosylation sites follow: N176, N188, and N232. Residues 200–293 (NCGAKEIQVS…TILNINFQCA (94 aa)) are ZP-N. One can recognise a ZP domain in the interval 200–456 (NCGAKEIQVS…PCCSRSQQRS (257 aa)). N-linked (GlcNAc...) asparagine glycosylation is found at N263 and N314. Residues 294 to 317 (YPLDMKVSLQTALHPIVSSLNISV) form a flexible ZP-N/ZP-C linker region. The segment at 318 to 329 (DGEGEFTVRMAL) is internal hydrophobic patch (IHP). The tract at residues 318 to 456 (DGEGEFTVRM…PCCSRSQQRS (139 aa)) is ZP-C. 3 disulfides stabilise this stretch: C373–C433, C394–C449, and C438–C445. The segment at 463–471 (PARVLDLGP) is external hydrophobic patch (EHP). D484 is lipidated: GPI-anchor amidated aspartate. A propeptide spans 485 to 509 (GTPSTAGFLLAWPMLLLPILLAELF) (removed in mature form).

As to quaternary structure, interacts with SYCN. Interacts with bacterial adhesin fimH. N-glycosylated. Expressed in pancreas.

It localises to the zymogen granule membrane. The protein resides in the secreted. The protein localises to the cell membrane. It is found in the apical cell membrane. Its subcellular location is the membrane raft. It localises to the endosome. Functions as an intestinal M-cell transcytotic receptor specific of type-I-piliated bacteria that participates in the mucosal immune response toward these bacteria. At the apical membrane of M-cells it binds fimH, a protein of the bacteria type I pilus tip. Internalizes bound bacteria, like E.coli and S.typhimurium, from the lumen of the intestine and delivers them, through M-cells, to the underlying organized lymphoid follicles where they are captured by antigen-presenting dendritic cells to elicit a mucosal immune response. This chain is Pancreatic secretory granule membrane major glycoprotein GP2, found in Canis lupus familiaris (Dog).